The following is a 400-amino-acid chain: Integumentary mucin A.1 (400 aa).

The first 20 residues, 1–20 (MKHIILCIHFLLMVVGLGQA), serve as a signal peptide directing secretion. P-type domains lie at 21–64 (QDCS…FYNA) and 72–115 (LECS…YART). 3 cysteine pairs are disulfide-bonded: Cys23/Cys49, Cys33/Cys48, and Cys43/Cys60. Asn63 carries N-linked (GlcNAc...) asparagine glycosylation. Cystine bridges form between Cys74-Cys100, Cys84-Cys99, and Cys94-Cys111. 2 stretches are compositionally biased toward low complexity: residues 122–264 (PDTT…DTTP) and 272–299 (ETTT…ETTT). Residues 122 to 302 (PDTTTASTTA…TTTETTTAPP (181 aa)) form a disordered region. Repeat copies occupy residues 127–135 (ASTTAETTT), 136–144 (VPTTPETTT), 145–153 (VPTTPETTT), 154–162 (VPTTPETTT), 163–171 (VPTTPETTT), 172–180 (VPTTPETTT), 181–189 (VPTTPETTT), 190–198 (VPTTPETTT), 199–207 (VPTTPETTT), 208–216 (VPTTPETTT), 217–225 (VPTTPETTT), 226–234 (VPTTPETTT), 235–243 (ASTTAETTT), and 244–252 (VPTTPETTT). Residues 127–261 (ASTTAETTTV…TEPTTTPTTD (135 aa)) are 15 X 9 AA approximate tandem repeats of [AV]-[SP]-T-T-[AP]-E-T-T-T. The 1-15; approximate repeat unit spans residues 253-261 (EPTTTPTTD). Tandem repeats lie at residues 272 to 275 (ETTT), 276 to 279 (ETTT), 280 to 283 (ETTT), 284 to 287 (ETTT), 288 to 291 (ETTT), 292 to 295 (ETTT), and 296 to 299 (ETTT). Positions 272-299 (ETTTETTTETTTETTTETTTETTTETTT) are 7 X 4 AA repeats of E-T-T-T. 2 consecutive P-type domains span residues 298–343 (TTAP…FYTE) and 351–394 (AECT…FEKA). 5 disulfide bridges follow: Cys312–Cys327, Cys322–Cys339, Cys353–Cys379, Cys363–Cys378, and Cys373–Cys390.

In terms of processing, extensively O-glycosylated. Consist of about 70% carbohydrate and 30% protein. In terms of tissue distribution, expressed and stored exclusively in mature mucous glands of the skin.

It localises to the secreted. Its function is as follows. Could be involved in defense against microbial infections. Protects the epithelia from external environment. This Xenopus laevis (African clawed frog) protein is Integumentary mucin A.1.